Consider the following 757-residue polypeptide: Transcription factor FBD3 (757 aa).

The interval M1–R24 is disordered. The zn(2)-C6 fungal-type DNA-binding region spans C31–C58. Disordered stretches follow at residues G106–T161 and V202–P222. Basic and acidic residues predominate over residues N111–P120. The segment covering T125 to P135 has biased composition (polar residues).

It localises to the nucleus. In terms of biological role, transcription factor; part of the Fusarium detoxification of benzoxazolinone cluster involved in the degradation of benzoxazolinones produced by the host plant. Maize, wheat, and rye produce the 2 benzoxazinone phytoanticipins 2,4-dihy-droxy-7-methoxy-1,4-benzoxazin-3-one (DIMBOA) and 2,4-dihydroxy-1,4-benzoxazin-3-one (DIBOA) that, due to their inherent instability once released, spontaneously degrade to the more stable corresponding benzoxazolinones, 6-methoxy-2-benzoxazolinone (MBOA) and 2-benzoxazolinone (BOA), respectively. FDB3 controls the transcription of the FDB gene cluster in response to 6-methoxy-2-benzoxazolinone (MBOA). The protein is Transcription factor FBD3 of Fusarium pseudograminearum (strain CS3096) (Wheat and barley crown-rot fungus).